Reading from the N-terminus, the 136-residue chain is Translation initiation factor 5A (136 aa).

Position 37 is a hypusine (Lys-37).

Belongs to the eIF-5A family.

It localises to the cytoplasm. Functionally, functions by promoting the formation of the first peptide bond. The sequence is that of Translation initiation factor 5A (eIF5A) from Thermococcus onnurineus (strain NA1).